The chain runs to 284 residues: Nucleotide-binding protein NGK_0463 (284 aa).

8–15 contributes to the ATP binding site; that stretch reads GLSGSGKS. 58-61 is a binding site for GTP; the sequence is DVRS.

This sequence belongs to the RapZ-like family.

Its function is as follows. Displays ATPase and GTPase activities. This is Nucleotide-binding protein NGK_0463 from Neisseria gonorrhoeae (strain NCCP11945).